A 466-amino-acid chain; its full sequence is Methylenomycin A resistance protein (466 aa).

14 consecutive transmembrane segments (helical) span residues 16–36 (ISVL…VTVV), 56–76 (WVVD…GALA), 83–103 (TIYI…AASI), 113–133 (LIQG…LAAS), 146–166 (LWAA…GVLV), 168–188 (LAGW…ALIS), 203–223 (VNII…YALI), 234–254 (VILV…LREI), 276–296 (FIGF…SLFL), 305–325 (FMAG…NLLF), 337–357 (LMFV…VLIS), 367–387 (VLMS…TTVI), 409–429 (IGAL…ATWY), and 434–454 (FAFL…WLFL).

The protein belongs to the major facilitator superfamily. EmrB family.

The protein resides in the cell membrane. Resistance to the epoxide antibiotic methylenomycin. The chain is Methylenomycin A resistance protein (mmr) from Bacillus subtilis (strain 168).